The primary structure comprises 970 residues: Sodium/calcium exchanger 1 (970 aa).

A signal peptide spans 1 to 32 (MLQLRLLPTFSMGCHLLAVVALLFSHVDLISA). Topologically, residues 33 to 71 (ETEMEGEGNETGECTGSYYCKKGVILPIWEPQDPSFGDK) are extracellular. Asparagine 41 is a glycosylation site (N-linked (GlcNAc...) asparagine). Residues 72 to 92 (IARATVYFVAMVYMFLGVSII) form a helical membrane-spanning segment. Over 93–133 (ADRFMSSIEVITSQEKEITIKKPNGETTKTTVRIWNETVSN) the chain is Cytoplasmic. A helical transmembrane segment spans residues 134-154 (LTLMALGSSAPEILLSVIEVC). The stretch at 138-178 (ALGSSAPEILLSVIEVCGHNFTAGDLGPSTIVGSAAFNMFI) is one Alpha-1 repeat. At 155–167 (GHNFTAGDLGPST) the chain is on the extracellular side. N-linked (GlcNAc...) asparagine glycosylation is present at asparagine 157. Residues 168 to 188 (IVGSAAFNMFIIIALCVYVVP) form a helical membrane-spanning segment. Topologically, residues 189–201 (DGETRKIKHLRVF) are cytoplasmic. A helical membrane pass occupies residues 202–222 (FVTAAWSIFAYTWLYIILSVI). Residues 223–228 (SPGVVE) lie on the Extracellular side of the membrane. The chain crosses the membrane as a helical span at residues 229-249 (VWEGLLTFFFFPICVVFAWVA). Residues 250 to 797 (DRRLLFYKYV…FVPPTEYWNG (548 aa)) lie on the Cytoplasmic side of the membrane. The putative calmodulin-binding region stretch occupies residues 251-270 (RRLLFYKYVYKRYRAGKQRG). Phosphoserine occurs at positions 282 and 389. Calx-beta domains follow at residues 393-493 (VNTE…VHLS) and 524-624 (ATVT…LEIG). Glutamate 417, aspartate 453, aspartate 478, aspartate 479, isoleucine 481, glutamate 483, glutamate 486, aspartate 530, aspartate 531, aspartate 532, glutamate 548, aspartate 584, aspartate 610, glutamate 611, glutamate 612, and glutamate 715 together coordinate Ca(2+). A helical membrane pass occupies residues 798–818 (WACFIVSILMIGILTAFIGDL). The Extracellular segment spans residues 819-821 (ASH). Residues 822–842 (FGCTIGLKDSVTAVVFVALGT) traverse the membrane as a helical segment. One copy of the Alpha-2 repeat lies at 839 to 875 (ALGTSVPDTFASKVAATQDQYADASIGNVTGSNAVNV). The Cytoplasmic portion of the chain corresponds to 843–871 (SVPDTFASKVAATQDQYADASIGNVTGSN). A helical transmembrane segment spans residues 872-892 (AVNVFLGIGVAWSIAAIYHAA). The Extracellular segment spans residues 893-903 (NGEQFKVSPGT). A helical transmembrane segment spans residues 904–924 (LAFSVTLFTIFAFINVGVLLY). Over 925–941 (RRRPEIGGELGGPRTAK) the chain is Cytoplasmic. Residues 942–962 (LLTSCLFVLLWLLYIFFSSLE) traverse the membrane as a helical segment. Residues 963–970 (AYCHIKGF) lie on the Extracellular side of the membrane.

Belongs to the Ca(2+):cation antiporter (CaCA) (TC 2.A.19) family. SLC8 subfamily. In terms of tissue distribution, cardiac sarcolemma (at protein level).

It localises to the cell membrane. Its subcellular location is the sarcolemma. It catalyses the reaction Ca(2+)(in) + 3 Na(+)(out) = Ca(2+)(out) + 3 Na(+)(in). With respect to regulation, activated by micromolar levels of Ca(2+). In the absence of regulatory Ca(2+), channels open rapidly, and then inactivate rapidly. Inactivation is enhanced by Na(+) and is inhibited by micromolar levels of Ca(2+). Its function is as follows. Mediates the exchange of one Ca(2+) ion against three to four Na(+) ions across the cell membrane, and thereby contributes to the regulation of cytoplasmic Ca(2+) levels and Ca(2+)-dependent cellular processes. Contributes to Ca(2+) transport during excitation-contraction coupling in muscle. In a first phase, voltage-gated channels mediate the rapid increase of cytoplasmic Ca(2+) levels due to release of Ca(2+) stores from the endoplasmic reticulum. SLC8A1 mediates the export of Ca(2+) from the cell during the next phase, so that cytoplasmic Ca(2+) levels rapidly return to baseline. Required for normal embryonic heart development and the onset of heart contractions. This Canis lupus familiaris (Dog) protein is Sodium/calcium exchanger 1 (SLC8A1).